Reading from the N-terminus, the 561-residue chain is uncharacterized protein (561 aa).

Positions 314–323 are enriched in low complexity; that stretch reads ANNGSGDSSS. The segment at 314 to 366 is disordered; that stretch reads ANNGSGDSSSTALNNESPNTTPKSRTFFSPKGHRRNSSHVSSLTSRSTKKPIT. Polar residues predominate over residues 324-340; sequence TALNNESPNTTPKSRTF. Residue Ser-514 is modified to Phosphoserine.

The protein localises to the cytoplasm. This is an uncharacterized protein from Saccharomyces cerevisiae (strain ATCC 204508 / S288c) (Baker's yeast).